We begin with the raw amino-acid sequence, 75 residues long: Small ribosomal subunit protein bS18 (75 aa).

Belongs to the bacterial ribosomal protein bS18 family. As to quaternary structure, part of the 30S ribosomal subunit. Forms a tight heterodimer with protein bS6.

In terms of biological role, binds as a heterodimer with protein bS6 to the central domain of the 16S rRNA, where it helps stabilize the platform of the 30S subunit. The protein is Small ribosomal subunit protein bS18 of Histophilus somni (strain 129Pt) (Haemophilus somnus).